A 155-amino-acid polypeptide reads, in one-letter code: 2-C-methyl-D-erythritol 2,4-cyclodiphosphate synthase (155 aa).

Aspartate 8 and histidine 10 together coordinate a divalent metal cation. Residues 8–10 (DVH) and 34–35 (HS) contribute to the 4-CDP-2-C-methyl-D-erythritol 2-phosphate site. Histidine 42 serves as a coordination point for a divalent metal cation. 4-CDP-2-C-methyl-D-erythritol 2-phosphate is bound by residues 56-58 (DIG), 61-65 (FPDSD), 100-106 (AQKPKML), 132-135 (TTEE), phenylalanine 139, and lysine 142.

It belongs to the IspF family. In terms of assembly, homotrimer. A divalent metal cation serves as cofactor.

It catalyses the reaction 4-CDP-2-C-methyl-D-erythritol 2-phosphate = 2-C-methyl-D-erythritol 2,4-cyclic diphosphate + CMP. The protein operates within isoprenoid biosynthesis; isopentenyl diphosphate biosynthesis via DXP pathway; isopentenyl diphosphate from 1-deoxy-D-xylulose 5-phosphate: step 4/6. Functionally, involved in the biosynthesis of isopentenyl diphosphate (IPP) and dimethylallyl diphosphate (DMAPP), two major building blocks of isoprenoid compounds. Catalyzes the conversion of 4-diphosphocytidyl-2-C-methyl-D-erythritol 2-phosphate (CDP-ME2P) to 2-C-methyl-D-erythritol 2,4-cyclodiphosphate (ME-CPP) with a corresponding release of cytidine 5-monophosphate (CMP). This chain is 2-C-methyl-D-erythritol 2,4-cyclodiphosphate synthase, found in Clostridium botulinum (strain 657 / Type Ba4).